We begin with the raw amino-acid sequence, 277 residues long: Phosphonates import ATP-binding protein PhnC 2 (277 aa).

The 249-residue stretch at 3-251 (ISLNGISVQH…LLQALYAQHL (249 aa)) folds into the ABC transporter domain. 40–47 (GPSGAGKT) is an ATP binding site.

It belongs to the ABC transporter superfamily. Phosphonates importer (TC 3.A.1.9.1) family. As to quaternary structure, the complex is composed of two ATP-binding proteins (PhnC), two transmembrane proteins (PhnE) and a solute-binding protein (PhnD).

The protein resides in the cell inner membrane. The enzyme catalyses phosphonate(out) + ATP + H2O = phosphonate(in) + ADP + phosphate + H(+). In terms of biological role, part of the ABC transporter complex PhnCDE involved in phosphonates import. Responsible for energy coupling to the transport system. The sequence is that of Phosphonates import ATP-binding protein PhnC 2 from Albidiferax ferrireducens (strain ATCC BAA-621 / DSM 15236 / T118) (Rhodoferax ferrireducens).